The primary structure comprises 628 residues: (-)-beta-pinene synthase 1, chloroplastic (628 aa).

The N-terminal 51 residues, 1 to 51 (MDLISVLPSASKSCVCLHKPLSSSTHKLKPFCRTIRILGMPRPRKSVLMVS), are a transit peptide targeting the chloroplast. Asp379, Asp383, and Asp531 together coordinate Mg(2+). The DDXXD motif motif lies at 379–383 (DDMYD).

Belongs to the terpene synthase family. Tpsd subfamily. Requires Mg(2+) as cofactor. Mn(2+) serves as cofactor.

The protein localises to the plastid. The protein resides in the chloroplast. It catalyses the reaction (2E)-geranyl diphosphate = (1S,5S)-beta-pinene + diphosphate. The enzyme catalyses (2E)-geranyl diphosphate = (1S,5S)-alpha-pinene + diphosphate. It participates in terpene metabolism; oleoresin biosynthesis. Its pathway is secondary metabolite biosynthesis; terpenoid biosynthesis. Functionally, monoterpene synthase (TPS) involved in the biosynthesis of monoterpene natural products included in conifer oleoresin secretions and volatile emissions; these compounds contribute to biotic and abiotic stress defense against herbivores and pathogens. Catalyzes the conversion of (2E)-geranyl diphosphate (GPP) to (-)-beta-pinene and, to a lower extent, to (-)-alpha-pinene. The polypeptide is (-)-beta-pinene synthase 1, chloroplastic (Pinus banksiana (Jack pine)).